The following is a 229-amino-acid chain: 4-hydroxy-tetrahydrodipicolinate reductase (229 aa).

Residues 10–15 (GSAGRM), 78–80 (GTT), and 102–105 (SSNM) contribute to the NAD(+) site. Catalysis depends on H133, which acts as the Proton donor/acceptor. H134 contacts (S)-2,3,4,5-tetrahydrodipicolinate. Catalysis depends on K137, which acts as the Proton donor. 143 to 144 (GT) contributes to the (S)-2,3,4,5-tetrahydrodipicolinate binding site.

Belongs to the DapB family.

It localises to the cytoplasm. The catalysed reaction is (S)-2,3,4,5-tetrahydrodipicolinate + NAD(+) + H2O = (2S,4S)-4-hydroxy-2,3,4,5-tetrahydrodipicolinate + NADH + H(+). It carries out the reaction (S)-2,3,4,5-tetrahydrodipicolinate + NADP(+) + H2O = (2S,4S)-4-hydroxy-2,3,4,5-tetrahydrodipicolinate + NADPH + H(+). Its pathway is amino-acid biosynthesis; L-lysine biosynthesis via DAP pathway; (S)-tetrahydrodipicolinate from L-aspartate: step 4/4. Catalyzes the conversion of 4-hydroxy-tetrahydrodipicolinate (HTPA) to tetrahydrodipicolinate. The polypeptide is 4-hydroxy-tetrahydrodipicolinate reductase (Bdellovibrio bacteriovorus (strain ATCC 15356 / DSM 50701 / NCIMB 9529 / HD100)).